The chain runs to 164 residues: ATP synthase subunit b 2 (164 aa).

The helical transmembrane segment at 4-24 (TFWAFVGLVLFLALLVYFEVP) threads the bilayer.

The protein belongs to the ATPase B chain family. As to quaternary structure, F-type ATPases have 2 components, F(1) - the catalytic core - and F(0) - the membrane proton channel. F(1) has five subunits: alpha(3), beta(3), gamma(1), delta(1), epsilon(1). F(0) has three main subunits: a(1), b(2) and c(10-14). The alpha and beta chains form an alternating ring which encloses part of the gamma chain. F(1) is attached to F(0) by a central stalk formed by the gamma and epsilon chains, while a peripheral stalk is formed by the delta and b chains.

The protein localises to the cell inner membrane. F(1)F(0) ATP synthase produces ATP from ADP in the presence of a proton or sodium gradient. F-type ATPases consist of two structural domains, F(1) containing the extramembraneous catalytic core and F(0) containing the membrane proton channel, linked together by a central stalk and a peripheral stalk. During catalysis, ATP synthesis in the catalytic domain of F(1) is coupled via a rotary mechanism of the central stalk subunits to proton translocation. In terms of biological role, component of the F(0) channel, it forms part of the peripheral stalk, linking F(1) to F(0). The sequence is that of ATP synthase subunit b 2 from Bartonella henselae (strain ATCC 49882 / DSM 28221 / CCUG 30454 / Houston 1) (Rochalimaea henselae).